Consider the following 137-residue polypeptide: Protein apnoia (137 aa).

Transmembrane regions (helical) follow at residues 7 to 27 (IVFA…QQQA), 55 to 75 (LVPG…LTVV), and 76 to 96 (SIKG…QMLS).

As to quaternary structure, interacts with crb.

It is found in the apical cell membrane. Transmembrane protein that plays a key role in trachea development by regulating crb localization and maintenance at the apical cell membrane. Required for anisotropic apical surface expansion important for tracheal tube elongation and lumen stability at larval stages. The chain is Protein apnoia from Drosophila melanogaster (Fruit fly).